The following is a 446-amino-acid chain: 23S rRNA (uracil(1939)-C(5))-methyltransferase RlmD (446 aa).

In terms of domain architecture, TRAM spans 6–64 (KKLPQESITCEIESLSHEGRGVSHKDGKTLFVEGALPGETVTARYVNSRRSYDELAVEE). [4Fe-4S] cluster contacts are provided by Cys-77, Cys-83, Cys-86, and Cys-165. The S-adenosyl-L-methionine site is built by Gln-275, Phe-304, Asn-309, Glu-325, Asp-352, and Asp-377. Cys-403 (nucleophile) is an active-site residue.

It belongs to the class I-like SAM-binding methyltransferase superfamily. RNA M5U methyltransferase family. RlmD subfamily.

The catalysed reaction is uridine(1939) in 23S rRNA + S-adenosyl-L-methionine = 5-methyluridine(1939) in 23S rRNA + S-adenosyl-L-homocysteine + H(+). Catalyzes the formation of 5-methyl-uridine at position 1939 (m5U1939) in 23S rRNA. In Hahella chejuensis (strain KCTC 2396), this protein is 23S rRNA (uracil(1939)-C(5))-methyltransferase RlmD.